The primary structure comprises 801 residues: Growth-differentiation transition protein 7 (801 aa).

The first 22 residues, 1 to 22 (MIKTILIKLILLVIFCYHFLFA), serve as a signal peptide directing secretion.

The protein belongs to the GDT family.

It localises to the secreted. The polypeptide is Growth-differentiation transition protein 7 (gdt7) (Dictyostelium discoideum (Social amoeba)).